A 409-amino-acid chain; its full sequence is MPNFKSTAPKAKFAIYNNSNPDSESGFVEFQGYSFGAPVSCSGEAVFTTSLVGYPESMTDPSYKGQILVFTQPLIGNYGVPSGEERDDFNLLKYLESPHIHVRGIVVAEYAWRYSHWTAVESLATWCQRENVTAIGGIDTRAVVQILREQGSSPSTITVQGSFIPKPIKPETDLVKIVSTKKPFFVKALSSVKTPFNVALIDCGVKENIIRCLVERGANVTVFPYDYPITSVANQFDGIFISNGPGDPVQCMESTVPELKKLLETNTLQDLPIFGICLGHQLLALASGGKTIKLGYGNRAHNIPALDLTTGQCHITSQNHGYAVDVDTLPESGFKPFFQNLNDKSNEGMIHVSRPIFSTQFHPEAKGGPRDSAVLFDRYFDNMSQYRALKGPKVKLTLNTSSLATERVF.

A Glutamine amidotransferase type-1 domain is found at 197–389; that stretch reads NVALIDCGVK…FDNMSQYRAL (193 aa). The active-site Nucleophile is C277. Active-site residues include H362 and E364.

It belongs to the CarA family. As to quaternary structure, heterodimer composed of 2 chains; the small (or glutamine) chain promotes the hydrolysis of glutamine to ammonia, which is used by the large (or ammonia) chain to synthesize carbamoyl phosphate.

Its subcellular location is the cytoplasm. It carries out the reaction hydrogencarbonate + L-glutamine + 2 ATP + H2O = carbamoyl phosphate + L-glutamate + 2 ADP + phosphate + 2 H(+). The catalysed reaction is L-glutamine + H2O = L-glutamate + NH4(+). It participates in amino-acid biosynthesis; L-arginine biosynthesis; carbamoyl phosphate from bicarbonate: step 1/1. Functionally, small subunit of the arginine-specific carbamoyl phosphate synthase (CPSase). CPSase catalyzes the formation of carbamoyl phosphate from the ammonia moiety of glutamine, carbonate, and phosphate donated by ATP, constituting the first step of 2 biosynthetic pathways, one leading to arginine and/or urea and the other to pyrimidine nucleotides. The small subunit (glutamine amidotransferase) binds and cleaves glutamine to supply the large subunit with the substrate ammonia. This chain is Carbamoyl phosphate synthase arginine-specific small chain (CPA1), found in Kluyveromyces lactis (strain ATCC 8585 / CBS 2359 / DSM 70799 / NBRC 1267 / NRRL Y-1140 / WM37) (Yeast).